The following is a 559-amino-acid chain: Urocanate hydratase (559 aa).

NAD(+) contacts are provided by residues 53–54 (GG), glutamine 131, 177–179 (GMG), glutamate 197, arginine 202, 243–244 (NA), 264–268 (QTSAH), 274–275 (YL), and tyrosine 323. Cysteine 411 is an active-site residue. Glycine 493 provides a ligand contact to NAD(+).

It belongs to the urocanase family. Requires NAD(+) as cofactor.

The protein resides in the cytoplasm. The enzyme catalyses 4-imidazolone-5-propanoate = trans-urocanate + H2O. It functions in the pathway amino-acid degradation; L-histidine degradation into L-glutamate; N-formimidoyl-L-glutamate from L-histidine: step 2/3. Its function is as follows. Catalyzes the conversion of urocanate to 4-imidazolone-5-propionate. This is Urocanate hydratase from Pseudomonas paraeruginosa (strain DSM 24068 / PA7) (Pseudomonas aeruginosa (strain PA7)).